Consider the following 862-residue polypeptide: Transcription initiation factor TFIID subunit 4B (862 aa).

A sufficient for interaction with ZNF628 region spans residues 100–241; sequence NTTTIQFPAN…TPSNEPNLKA (142 aa). Residues 219–237 are compositionally biased toward polar residues; that stretch reads VTTLKPSSLGASSTPSNEP. Positions 219 to 239 are disordered; that stretch reads VTTLKPSSLGASSTPSNEPNL. The TAFH domain occupies 256 to 353; it reads LENVKKCKNF…CVQQTSSDMV (98 aa). A required for interaction with P65/RELA region spans residues 511–533; it reads PGPVLSQPAGIPQAVQVKQLVVQ. A Nuclear export signal motif is present at residues 516-556; it reads SQPAGIPQAVQVKQLVVQQPSGGNEKQVTTISHSSTLTIQK. S595 carries the phosphoserine modification. One can recognise a Histone-fold domain in the interval 653–702; it reads PFLFIGALQKRILDIGKKHDITELNSDAVNLISQATQERLRGLLEKLTAI. Residues 722–787 adopt a coiled-coil conformation; the sequence is TRSQLKFLEK…LAQIQHRDAN (66 aa). A required for interaction with TAF12 region spans residues 830–862; that stretch reads PRITRICLRDLIFCMEQEREMKYSRALYLALLK.

It belongs to the TAF4 family. In terms of assembly, TFIID is composed of TATA binding protein (TBP) and a number of TBP-associated factors (TAFs). Heterodimerizes with TAF12/TFII20 via the C-terminal H2A-like histone-fold domain. This heterodimer forms a histone-like octamer with the TAF6/TAFII70-TAF9/TAFII31 heterodimer. Interacts with P65/RELA homodimers and P65/RELA-REL heterodimers. Interaction with POU2AF1, via its C-terminal activation domain, is required for octamer-dependent transcription. Interacts with ZNF628. Post-translationally, under stimulation by forskolin, Isoform 1 is phosphorylated by protein kinase A (PKA). Preferentially expressed in ovarian granulosa cells (at protein level). Highly expressed in B-cells.

The protein resides in the nucleus. It localises to the cytoplasm. Cell type-specific subunit of the general transcription factor TFIID that may function as a gene-selective coactivator in certain cells. TFIID is a multimeric protein complex that plays a central role in mediating promoter responses to various activators and repressors. TAF4B is a transcriptional coactivator of the p65/RELA NF-kappa-B subunit. Involved in the activation of a subset of antiapoptotic genes including TNFAIP3. May be involved in regulating folliculogenesis. Through interaction with OCBA/POU2AF1, acts as a coactivator of B-cell-specific transcription. Plays a role in spermiogenesis and oogenesis. In Homo sapiens (Human), this protein is Transcription initiation factor TFIID subunit 4B (TAF4B).